Reading from the N-terminus, the 199-residue chain is Imidazoleglycerol-phosphate dehydratase (199 aa).

It belongs to the imidazoleglycerol-phosphate dehydratase family.

It is found in the cytoplasm. It catalyses the reaction D-erythro-1-(imidazol-4-yl)glycerol 3-phosphate = 3-(imidazol-4-yl)-2-oxopropyl phosphate + H2O. The protein operates within amino-acid biosynthesis; L-histidine biosynthesis; L-histidine from 5-phospho-alpha-D-ribose 1-diphosphate: step 6/9. The chain is Imidazoleglycerol-phosphate dehydratase from Desulfotalea psychrophila (strain LSv54 / DSM 12343).